The chain runs to 237 residues: Large ribosomal subunit protein uL2 (237 aa).

Residues 202–237 form a disordered region; that stretch reads FGGGNRKHPGKPTTVSRNAPPGRKVGHIAARRTGKR. Positions 225 to 237 are enriched in basic residues; that stretch reads KVGHIAARRTGKR.

Belongs to the universal ribosomal protein uL2 family. As to quaternary structure, part of the 50S ribosomal subunit. Forms a bridge to the 30S subunit in the 70S ribosome.

One of the primary rRNA binding proteins. Required for association of the 30S and 50S subunits to form the 70S ribosome, for tRNA binding and peptide bond formation. It has been suggested to have peptidyltransferase activity; this is somewhat controversial. Makes several contacts with the 16S rRNA in the 70S ribosome. The protein is Large ribosomal subunit protein uL2 of Methanococcoides burtonii (strain DSM 6242 / NBRC 107633 / OCM 468 / ACE-M).